The following is a 347-amino-acid chain: MKASILRSVRSAVSRSSSSNRLLSRSFATESVPERKVAVLGAAGGIGQPLALLMKLNPLVSKLALYDIAGTPGVAADVGHVNTRSEVTGYVGEEQLGKALEGSDVVIIPAGVPRKPGMTRDDLFNINAGIVKSLCTAIAKYCPNALINMISNPVNSTVPIAAEVFKKAGTYDEKKLFGVTTLDVVRAKTFYAGKANVPVAEVNVPVIGGHAGITILPLFSQATPRANLSDDTIVALTKRTQDGGTEVVEAKAGKGSATLSMAYAGALFADACLKGLNGVPDVVECSFVQSTVTELPFFASKVKLGKNGVESVLDLGPLSDFEKEGLEKLKPELKASIEKGIQFANAN.

Residues 1–27 constitute a mitochondrion transit peptide; the sequence is MKASILRSVRSAVSRSSSSNRLLSRSF. Residues 41–47 and aspartate 67 each bind NAD(+); that span reads GAAGGIG. Substrate-binding residues include arginine 114 and arginine 120. NAD(+)-binding positions include asparagine 127 and 150-152; that span reads ISN. Substrate is bound by residues asparagine 152 and arginine 186. The active-site Proton acceptor is the histidine 210. An NAD(+)-binding site is contributed by methionine 261.

The protein belongs to the LDH/MDH superfamily. MDH type 1 family. As to quaternary structure, homodimer.

Its subcellular location is the mitochondrion matrix. The enzyme catalyses (S)-malate + NAD(+) = oxaloacetate + NADH + H(+). This chain is Malate dehydrogenase, mitochondrial (MMDH), found in Citrullus lanatus (Watermelon).